The primary structure comprises 194 residues: ATP-dependent Clp protease proteolytic subunit (194 aa).

S98 (nucleophile) is an active-site residue. H123 is an active-site residue.

It belongs to the peptidase S14 family. In terms of assembly, fourteen ClpP subunits assemble into 2 heptameric rings which stack back to back to give a disk-like structure with a central cavity, resembling the structure of eukaryotic proteasomes.

The protein localises to the cytoplasm. The enzyme catalyses Hydrolysis of proteins to small peptides in the presence of ATP and magnesium. alpha-casein is the usual test substrate. In the absence of ATP, only oligopeptides shorter than five residues are hydrolyzed (such as succinyl-Leu-Tyr-|-NHMec, and Leu-Tyr-Leu-|-Tyr-Trp, in which cleavage of the -Tyr-|-Leu- and -Tyr-|-Trp bonds also occurs).. In terms of biological role, cleaves peptides in various proteins in a process that requires ATP hydrolysis. Has a chymotrypsin-like activity. Plays a major role in the degradation of misfolded proteins. The chain is ATP-dependent Clp protease proteolytic subunit from Staphylococcus carnosus (strain TM300).